Reading from the N-terminus, the 588-residue chain is Neopullulanase (588 aa).

Positions 147, 149, 153, 172, and 174 each coordinate Ca(2+). Substrate-binding residues include histidine 247 and arginine 326. The active-site Nucleophile is aspartate 328. Glutamate 357 acts as the Proton donor in catalysis. Substrate is bound by residues 423 to 424 (HD), aspartate 468, and arginine 472.

It belongs to the glycosyl hydrolase 13 family. As to quaternary structure, homodimer. It depends on Ca(2+) as a cofactor.

The enzyme catalyses Hydrolysis of pullulan to panose (6-alpha-D-glucosylmaltose).. Functionally, hydrolyzes pullulan efficiently but only a small amount of starch. Endohydrolysis of 1,4-alpha-glucosidic linkages in pullulan to form panose. Also cleaves (1-6)-alpha-glucosidic linkages to form maltotriose. In Geobacillus stearothermophilus (Bacillus stearothermophilus), this protein is Neopullulanase (nplT).